We begin with the raw amino-acid sequence, 78 residues long: Acyl carrier protein (78 aa).

One can recognise a Carrier domain in the interval 2–77; that stretch reads SEIASRVKAI…DAVAYIEEHA (76 aa). S37 carries the O-(pantetheine 4'-phosphoryl)serine modification.

This sequence belongs to the acyl carrier protein (ACP) family. In terms of processing, 4'-phosphopantetheine is transferred from CoA to a specific serine of apo-ACP by AcpS. This modification is essential for activity because fatty acids are bound in thioester linkage to the sulfhydryl of the prosthetic group.

The protein resides in the cytoplasm. The protein operates within lipid metabolism; fatty acid biosynthesis. In terms of biological role, carrier of the growing fatty acid chain in fatty acid biosynthesis. In Bacteroides fragilis (strain ATCC 25285 / DSM 2151 / CCUG 4856 / JCM 11019 / LMG 10263 / NCTC 9343 / Onslow / VPI 2553 / EN-2), this protein is Acyl carrier protein.